The sequence spans 186 residues: ADP-ribosylation factor-like protein 6 (186 aa).

Gly2 carries N-myristoyl glycine lipidation. GTP is bound by residues 24–31 (GLDNSGKT), Thr50, 69–73 (DMSGQ), Gly72, 130–133 (NKMD), and Ala164. A Mg(2+)-binding site is contributed by Thr50.

This sequence belongs to the small GTPase superfamily. Arf family. Interacts with SEC61B, ARL6IP1, ARL6IP2, ARL6IP3, ARL6IP4 ARL6IP5 and ARL6IP6. Interacts (GTP-bound form) with the BBSome a complex that contains BBS1, BBS2, BBS4, BBS5, BBS7, BBS8/TTC8, BBS9 and BBIP10. Interacts (GTP-free form) with IFT27.

It is found in the cell projection. Its subcellular location is the cilium membrane. It localises to the cytoplasm. The protein resides in the cytoskeleton. The protein localises to the cilium axoneme. It is found in the cilium basal body. Involved in membrane protein trafficking at the base of the ciliary organelle. Mediates recruitment onto plasma membrane of the BBSome complex which would constitute a coat complex required for sorting of specific membrane proteins to the primary cilia. Together with the BBSome complex and LTZL1, controls SMO ciliary trafficking and contributes to the sonic hedgehog (SHH) pathway regulation. May regulate cilia assembly and disassembly and subsequent ciliary signaling events such as the Wnt signaling cascade. Isoform 2 may be required for proper retinal function and organization. This is ADP-ribosylation factor-like protein 6 (ARL6) from Pongo abelii (Sumatran orangutan).